A 239-amino-acid polypeptide reads, in one-letter code: Sugar fermentation stimulation protein homolog (239 aa).

The protein belongs to the SfsA family.

The chain is Sugar fermentation stimulation protein homolog from Agrobacterium fabrum (strain C58 / ATCC 33970) (Agrobacterium tumefaciens (strain C58)).